Reading from the N-terminus, the 55-residue chain is Ribosome modulation factor (55 aa).

It belongs to the ribosome modulation factor family. In terms of assembly, associates exclusively with 100S ribosomes.

It localises to the cytoplasm. In terms of biological role, during stationary phase, converts 70S ribosomes to an inactive dimeric form (100S ribosomes). May form immature 90S particles, which are converted to mature 100S ribosomes by the hibernation promoting factor Hpf. The chain is Ribosome modulation factor from Escherichia coli O157:H7.